Here is a 182-residue protein sequence, read N- to C-terminus: Adenine phosphoribosyltransferase (182 aa).

Belongs to the purine/pyrimidine phosphoribosyltransferase family. As to quaternary structure, homodimer.

Its subcellular location is the cytoplasm. It carries out the reaction AMP + diphosphate = 5-phospho-alpha-D-ribose 1-diphosphate + adenine. The protein operates within purine metabolism; AMP biosynthesis via salvage pathway; AMP from adenine: step 1/1. In terms of biological role, catalyzes a salvage reaction resulting in the formation of AMP, that is energically less costly than de novo synthesis. The polypeptide is Adenine phosphoribosyltransferase (Wolinella succinogenes (strain ATCC 29543 / DSM 1740 / CCUG 13145 / JCM 31913 / LMG 7466 / NCTC 11488 / FDC 602W) (Vibrio succinogenes)).